Here is a 164-residue protein sequence, read N- to C-terminus: Protein SprT (164 aa).

In terms of domain architecture, SprT-like spans 14-156; sequence QQAETFFKRT…LCRRCREPLV (143 aa). H69 contacts Zn(2+). The active site involves E70. Zn(2+) is bound at residue H73.

Belongs to the SprT family. Requires Zn(2+) as cofactor.

The protein localises to the cytoplasm. The sequence is that of Protein SprT from Pseudomonas savastanoi pv. phaseolicola (strain 1448A / Race 6) (Pseudomonas syringae pv. phaseolicola (strain 1448A / Race 6)).